The sequence spans 340 residues: DNA-directed RNA polymerase subunit alpha (340 aa).

The tract at residues 1–233 (MIQNEIPIPA…NLFIPLLHEK (233 aa)) is alpha N-terminal domain (alpha-NTD). The tract at residues 263 to 340 (RKEISFKHIF…LPKNKFSIND (78 aa)) is alpha C-terminal domain (alpha-CTD).

It belongs to the RNA polymerase alpha chain family. In plastids the minimal PEP RNA polymerase catalytic core is composed of four subunits: alpha, beta, beta', and beta''. When a (nuclear-encoded) sigma factor is associated with the core the holoenzyme is formed, which can initiate transcription.

The protein localises to the plastid. It localises to the chloroplast. It carries out the reaction RNA(n) + a ribonucleoside 5'-triphosphate = RNA(n+1) + diphosphate. In terms of biological role, DNA-dependent RNA polymerase catalyzes the transcription of DNA into RNA using the four ribonucleoside triphosphates as substrates. The chain is DNA-directed RNA polymerase subunit alpha (rpoA) from Anthoceros angustus (Hornwort).